The sequence spans 477 residues: Argininosuccinate lyase (477 aa).

This sequence belongs to the lyase 1 family. Argininosuccinate lyase subfamily.

Its subcellular location is the cytoplasm. It carries out the reaction 2-(N(omega)-L-arginino)succinate = fumarate + L-arginine. Its pathway is amino-acid biosynthesis; L-arginine biosynthesis; L-arginine from L-ornithine and carbamoyl phosphate: step 3/3. This chain is Argininosuccinate lyase, found in Corynebacterium diphtheriae (strain ATCC 700971 / NCTC 13129 / Biotype gravis).